The following is a 200-amino-acid chain: MARYTGPSWKISRRLGISLSGTGKELEKRPYAPGPHGPGQRKKLSEYGLQLQEKQKLRHMYGVNERQFRTLFDKAAKLPGKQGENFMILLETRLDNLVYRLGLARTRRQARQLVNHGHILVDGSRVDIPSFSVKPGQTIALREKSQNLAVVKESVEVNSFVPEYLTFDAEKLEGTFTRLPERSELAPEISEQLIVEFYSR.

The interval 22–42 is disordered; it reads TGKELEKRPYAPGPHGPGQRK. An S4 RNA-binding domain is found at 92 to 155; sequence TRLDNLVYRL…QNLAVVKESV (64 aa).

The protein belongs to the universal ribosomal protein uS4 family. Part of the 30S ribosomal subunit. Contacts protein S5. The interaction surface between S4 and S5 is involved in control of translational fidelity.

Its function is as follows. One of the primary rRNA binding proteins, it binds directly to 16S rRNA where it nucleates assembly of the body of the 30S subunit. Functionally, with S5 and S12 plays an important role in translational accuracy. In Bacillus pumilus (strain SAFR-032), this protein is Small ribosomal subunit protein uS4.